The chain runs to 118 residues: Small ribosomal subunit protein uS13 (118 aa).

Positions 93 to 118 are disordered; the sequence is RGLPVRGQRTKTNARTRKGPRKPIRK.

It belongs to the universal ribosomal protein uS13 family. In terms of assembly, part of the 30S ribosomal subunit. Forms a loose heterodimer with protein S19. Forms two bridges to the 50S subunit in the 70S ribosome.

Located at the top of the head of the 30S subunit, it contacts several helices of the 16S rRNA. In the 70S ribosome it contacts the 23S rRNA (bridge B1a) and protein L5 of the 50S subunit (bridge B1b), connecting the 2 subunits; these bridges are implicated in subunit movement. Contacts the tRNAs in the A and P-sites. The protein is Small ribosomal subunit protein uS13 of Pseudomonas fluorescens (strain ATCC BAA-477 / NRRL B-23932 / Pf-5).